Consider the following 806-residue polypeptide: Leucine--tRNA ligase (806 aa).

A 'HIGH' region motif is present at residues 40–51 (PYPSGAGLHVGH). The 'KMSKS' region motif lies at 576 to 580 (KMSKS). K579 is a binding site for ATP.

This sequence belongs to the class-I aminoacyl-tRNA synthetase family.

The protein resides in the cytoplasm. The catalysed reaction is tRNA(Leu) + L-leucine + ATP = L-leucyl-tRNA(Leu) + AMP + diphosphate. This is Leucine--tRNA ligase from Halalkalibacterium halodurans (strain ATCC BAA-125 / DSM 18197 / FERM 7344 / JCM 9153 / C-125) (Bacillus halodurans).